The chain runs to 258 residues: Tryptophan synthase alpha chain (258 aa).

Active-site proton acceptor residues include Glu-52 and Asp-63.

Belongs to the TrpA family. As to quaternary structure, tetramer of two alpha and two beta chains.

The enzyme catalyses (1S,2R)-1-C-(indol-3-yl)glycerol 3-phosphate + L-serine = D-glyceraldehyde 3-phosphate + L-tryptophan + H2O. It participates in amino-acid biosynthesis; L-tryptophan biosynthesis; L-tryptophan from chorismate: step 5/5. In terms of biological role, the alpha subunit is responsible for the aldol cleavage of indoleglycerol phosphate to indole and glyceraldehyde 3-phosphate. In Streptococcus pneumoniae serotype 4 (strain ATCC BAA-334 / TIGR4), this protein is Tryptophan synthase alpha chain.